The chain runs to 113 residues: Eukaryotic translation initiation factor 1b (113 aa).

Residue Ser-2 is modified to N-acetylserine. Ser-9 carries the phosphoserine modification.

It belongs to the SUI1 family.

Probably involved in translation. This chain is Eukaryotic translation initiation factor 1b (EIF1B), found in Homo sapiens (Human).